Consider the following 483-residue polypeptide: Low-density lipoprotein receptor-related protein 11 (483 aa).

The first 32 residues, 1 to 32 (MATRGGGPGPGFRHRALRGLLLLCLWLPGSRP), serve as a signal peptide directing secretion. The Extracellular portion of the chain corresponds to 33 to 433 (GEPAAPSSGV…GGEHPAPEAG (401 aa)). Positions 85–172 (AVPDTIIRTQ…FAPLRGYRTY (88 aa)) constitute an MANSC domain. Residues asparagine 152 and asparagine 275 are each glycosylated (N-linked (GlcNAc...) asparagine). The region spanning 193-287 (PVSKAGKDVV…VTVLPRPYST (95 aa)) is the PKD domain. The 37-residue stretch at 293–329 (ACSRYHFFCDSGCCIDIALACDGVRQCPDGSDEDFCQ) folds into the LDL-receptor class A domain. Intrachain disulfides connect cysteine 294–cysteine 306, cysteine 301–cysteine 319, and cysteine 313–cysteine 328. Residues 346–428 (AQPGAMGLNE…KSGQAGGEHP (83 aa)) form a disordered region. 2 stretches are compositionally biased toward polar residues: residues 367–376 (RATTHNQPAT) and 385–407 (HSTQ…SSGK). N-linked (GlcNAc...) asparagine glycosylation is present at asparagine 403. Positions 408–418 (NQEEGNYDLKS) are enriched in basic and acidic residues. The helical transmembrane segment at 434–456 (AVLPLALGLAITVLLLLMVTCRL) threads the bilayer. Residues 457-483 (RLVKQKLKKARPITSEESDYLINGMYL) are Cytoplasmic-facing. Serine 474 carries the phosphoserine modification.

Belongs to the LDLR family.

The protein localises to the membrane. This chain is Low-density lipoprotein receptor-related protein 11 (Lrp11), found in Mus musculus (Mouse).